The primary structure comprises 356 residues: Protein-arginine kinase (356 aa).

Residues 22 to 249 enclose the Phosphagen kinase C-terminal domain; sequence FRPISTLSLS…SKILSAETEA (228 aa). ATP is bound by residues 25 to 29, 172 to 176, and 202 to 207; these read ISTLS, VARAF, and SSLLPL.

Belongs to the ATP:guanido phosphotransferase family.

The catalysed reaction is L-arginyl-[protein] + ATP = N(omega)-phospho-L-arginyl-[protein] + ADP + H(+). In terms of biological role, catalyzes the specific phosphorylation of arginine residues in proteins. The polypeptide is Protein-arginine kinase (Chlamydia muridarum (strain MoPn / Nigg)).